A 403-amino-acid chain; its full sequence is Phosphoglycerate kinase (403 aa).

Substrate is bound by residues 21–23, arginine 37, 60–63, arginine 125, and arginine 158; these read DFN and HLGR. Residues lysine 209, glutamate 332, and 359–362 each bind ATP; that span reads GGDS.

Belongs to the phosphoglycerate kinase family. Monomer.

Its subcellular location is the cytoplasm. It carries out the reaction (2R)-3-phosphoglycerate + ATP = (2R)-3-phospho-glyceroyl phosphate + ADP. The protein operates within carbohydrate degradation; glycolysis; pyruvate from D-glyceraldehyde 3-phosphate: step 2/5. The protein is Phosphoglycerate kinase of Koribacter versatilis (strain Ellin345).